The chain runs to 138 residues: Small ribosomal subunit protein uS11c (138 aa).

The tract at residues 1–23 (MAKPIPRIGSRRNGRISSRKSTR) is disordered. The segment covering 9-23 (GSRRNGRISSRKSTR) has biased composition (basic residues).

It belongs to the universal ribosomal protein uS11 family. Part of the 30S ribosomal subunit.

It is found in the plastid. It localises to the chloroplast. The chain is Small ribosomal subunit protein uS11c from Cucumis sativus (Cucumber).